We begin with the raw amino-acid sequence, 798 residues long: Shutoff protein (798 aa).

Over residues 1–14 the composition is skewed to basic and acidic residues; it reads MESTADGDKARGEE. Residues 1 to 123 are disordered; sequence MESTADGDKA…SHSSDSELGC (123 aa). The segment covering 33–49 has biased composition (acidic residues); it reads APEDEHPDDGEPDEPAD. Residues 68-80 show a composition bias toward basic and acidic residues; that stretch reads GGRDAECDGEAAR. Over residues 86-105 the composition is skewed to polar residues; the sequence is DESSAPTTPSTAVRRSSGES. The tract at residues 309 to 376 is binding to host EIF4G; that stretch reads LMEVLLQPFA…GRPLYRSARA (68 aa). One can recognise an RRM domain in the interval 379–497; it reads SVFREPSSIK…AIYALETPTE (119 aa). Tyr-711 bears the Phosphotyrosine; by host mark. The segment at 740–798 is disordered; that stretch reads YADHARGAATSAEPSRALRPTSVATAAGNRTRGCSSARYRLGPTLRRRSNSSWPREWST. A compositionally biased stretch (polar residues) spans 789-798; sequence NSSWPREWST.

It belongs to the adenoviridae shutoff protein family. In terms of assembly, monomer. Interacts with hexon protein; this interaction allows chaperoning and trimerization of hexon proteins. Interacts (via N-terminus) with host initiation factor EIF4G (via C-terminus). Interacts (via RRM domain) with viral mRNAs that contain the tripartite leader; this interaction allows ribosome shunting and expression of viral late mRNAs. Might be cleaved by the viral protease. Post-translationally, phosphorylated. Tyrosine phosphorylation enhances preferential binding to tripartite leader mRNAs and allows ribosome shunting. In terms of processing, methylated. Asymmetric dimethylation by host PRMT1 of the Arg/Gly-rich region may regulate shutoff protein binding to hexon and promote the capsid assembly in the nucleus.

It is found in the host cytoplasm. Functionally, protein that inhibits host translation while promoting late viral translation by ribosome shunting. Blocks host cap-dependent translation by binding to eIF4G, displacing MKNK1 from cap initiation complexes and preventing EIF4E phosphorylation. Binds to the tripartite leader sequence of viral late mRNAs and recruits host eIF4G, PABPC1/poly-A binding protein and 40S ribosomes subunits on viral mRNAs, allowing ribosome shunting and efficient translation of late viral mRNAs even though conventional translation via ribosome scanning from the cap has been shut off in the host cell. During assembly, acts as a chaperone protein that helps hexon proteins assembly into trimers. The chain is Shutoff protein from Galliformes (FAdV-10).